Reading from the N-terminus, the 387-residue chain is Succinate--CoA ligase [ADP-forming] subunit beta (387 aa).

Residues 9–245 form the ATP-grasp domain; the sequence is KDLLESYGLK…KSQENAKELK (237 aa). ATP-binding positions include lysine 46, 53–55, glutamate 100, tyrosine 103, and glutamate 108; that span reads GRG. Asparagine 200 and aspartate 214 together coordinate Mg(2+). Substrate is bound by residues asparagine 265 and 322 to 324; that span reads GIV.

Belongs to the succinate/malate CoA ligase beta subunit family. Heterotetramer of two alpha and two beta subunits. The cofactor is Mg(2+).

It catalyses the reaction succinate + ATP + CoA = succinyl-CoA + ADP + phosphate. The enzyme catalyses GTP + succinate + CoA = succinyl-CoA + GDP + phosphate. It functions in the pathway carbohydrate metabolism; tricarboxylic acid cycle; succinate from succinyl-CoA (ligase route): step 1/1. Succinyl-CoA synthetase functions in the citric acid cycle (TCA), coupling the hydrolysis of succinyl-CoA to the synthesis of either ATP or GTP and thus represents the only step of substrate-level phosphorylation in the TCA. The beta subunit provides nucleotide specificity of the enzyme and binds the substrate succinate, while the binding sites for coenzyme A and phosphate are found in the alpha subunit. This Francisella tularensis subsp. tularensis (strain WY96-3418) protein is Succinate--CoA ligase [ADP-forming] subunit beta.